The chain runs to 360 residues: Type II methyltransferase M2.ScrFI (360 aa).

Residues 2 to 360 enclose the SAM-dependent MTase C5-type domain; sequence LRVFEAFAGY…SLFKELFKSQ (359 aa). The active site involves Cys127.

It belongs to the class I-like SAM-binding methyltransferase superfamily. C5-methyltransferase family.

The catalysed reaction is a 2'-deoxycytidine in DNA + S-adenosyl-L-methionine = a 5-methyl-2'-deoxycytidine in DNA + S-adenosyl-L-homocysteine + H(+). In terms of biological role, a methylase, recognizes the double-stranded sequence 5'-CCNGG-3', methylates C-2 on both strands, and protects the DNA from cleavage by the ScrFI endonuclease. The protein is Type II methyltransferase M2.ScrFI (scrFIBM) of Lactococcus lactis subsp. cremoris (Streptococcus cremoris).